The following is a 1823-amino-acid chain: AF4/FMR2 family member lilli (1823 aa).

The span at 1–41 (MAQQQQQQHQQQQHHQQQQQQLQQQQQLLQYNNNSYNLNYN) shows a compositional bias: low complexity. Disordered regions lie at residues 1 to 87 (MAQQ…DPEI), 126 to 305 (GFGS…ENHI), 422 to 544 (QQLT…KKKY), 570 to 626 (AGPG…WHLS), 686 to 712 (DSRHMDDDEDEQADQQHQQQQQRYGVG), 753 to 1057 (PKNQ…DIPT), 1071 to 1287 (AAAQ…LKPR), 1322 to 1350 (ARQHHHQPERLKTQQNGHLSSRSAEGART), 1413 to 1448 (FMLKQELPARRRKRSSSSSSSPYKEKKRKKEKAEQL), 1480 to 1531 (ENSA…AIAS), 1547 to 1567 (TCSEAVQTTPPPAAPPPAPRL), and 1715 to 1744 (GNTPSSISPSNSVGSQGSGSNTPPGKIVPQ). The segment covering 53 to 79 (REKYERQQGIQSDDRETSLFGEPRRLN) has biased composition (basic and acidic residues). Composition is skewed to low complexity over residues 126–147 (GFGSATTSFSSSSSASASSSAS), 156–174 (QQQQQQQQQQQQQHYQQQQ), and 205–249 (PSSS…TSSP). Positions 426-438 (PTPPKASPTPPVI) are enriched in pro residues. T434 carries the phosphothreonine modification. Positions 441-454 (LKTEKNHSLEKQDS) are enriched in basic and acidic residues. Over residues 456–466 (LENDLELSESD) the composition is skewed to acidic residues. S463 and S465 each carry phosphoserine. A compositionally biased stretch (low complexity) spans 475-531 (SAGNSSNSSESDSSESGSEASSKGDPQQQQQQQQQHLLHQQQQHQQQQLLLQQQQQQ). Positions 582-598 (AAGGVGSGSGSTGGGSS) are enriched in gly residues. A compositionally biased stretch (low complexity) spans 599–612 (SSGMGTMSSSNSSN). The segment covering 764–785 (SDSGSGSSGSGSSSSDSAGGSS) has biased composition (low complexity). Over residues 818–827 (HKAQPNSVTL) the composition is skewed to polar residues. A compositionally biased stretch (basic residues) spans 839-849 (PRQKKPRKKKM). A phosphoserine mark is found at S859 and S860. Composition is skewed to low complexity over residues 877 to 906 (AATAAAAAANAAAASVMPVAAAAAAAAAPA), 917 to 947 (QAQQQQQQLQLQQQQQQSGNLSSASASSSQA), 962 to 979 (GTASSSSSSGTAATVAAG), 1002 to 1057 (AAMA…DIPT), and 1102 to 1161 (NSSN…QLLQ). Residues 908 to 920 (KKGRGRPRKQAQQ) constitute a DNA-binding region (a.T hook). Phosphoserine occurs at positions 939 and 941. Polar residues predominate over residues 1172 to 1181 (TLKQSAQQRL). 2 stretches are compositionally biased toward low complexity: residues 1182 to 1203 (SSSDCSSSASSDSSSNSSASSS) and 1253 to 1280 (QQQQQQQQQQQQQQQQQQQQQQQQQQQQ). Residues 1334–1344 (TQQNGHLSSRS) show a composition bias toward polar residues. Residues 1480 to 1496 (ENSANASPNKLQQQNAR) are compositionally biased toward polar residues. The residue at position 1486 (S1486) is a Phosphoserine. Over residues 1497–1531 (QLPLSQSQLQHQHQHQHQLQQQQSQSTATGHAIAS) the composition is skewed to low complexity. Residues 1555–1565 (TPPPAAPPPAP) show a composition bias toward pro residues. The span at 1715–1735 (GNTPSSISPSNSVGSQGSGSN) shows a compositional bias: low complexity.

Belongs to the AF4 family.

The protein localises to the nucleus. Has a role in transcriptional regulation. Acts in parallel with the Ras/MAPK and the PI3K/PKB pathways in the control of cell identity and cellular growth. Essential for regulation of the cytoskeleton and cell growth but not for cell proliferation or growth rate. Required specifically for the microtubule-based basal transport of lipid droplets. Plays a partially redundant function downstream of Raf in cell fate specification in the developing eye. Pair-rule protein that regulates embryonic cellularization, gastrulation and segmentation. The polypeptide is AF4/FMR2 family member lilli (Drosophila virilis (Fruit fly)).